A 118-amino-acid polypeptide reads, in one-letter code: Phospholipase A2 'basic' (118 aa).

7 cysteine pairs are disulfide-bonded: C11-C70, C26-C117, C28-C44, C43-C98, C50-C91, C59-C84, and C77-C89. Residues Y27, G29, and G31 each contribute to the Ca(2+) site. H47 is an active-site residue. D48 lines the Ca(2+) pocket. Positions 52 to 69 (EKAGKMGCWPYLTLYKYK) match the Coagulation factor Xa binding motif motif. The active site involves D92.

Belongs to the phospholipase A2 family. Group I subfamily. D49 sub-subfamily. Ca(2+) serves as cofactor. In terms of tissue distribution, expressed by the venom gland.

The protein localises to the secreted. It catalyses the reaction a 1,2-diacyl-sn-glycero-3-phosphocholine + H2O = a 1-acyl-sn-glycero-3-phosphocholine + a fatty acid + H(+). In terms of biological role, snake venom phospholipase A2 (PLA2) that shows strong anticoagulant activity. Binds directly with the coagulation factor FXa (F10) and blocks the formation of the prothombinase complex. Acts by a nonenzymatic mechanism. Also inhibits the complex composed of tissue factor (F3) and coagulation factor VIIa (F7) (TF-VIIa complex) by both enzymatic and nonenzymatic mechanisms. PLA2 catalyzes the calcium-dependent hydrolysis of the 2-acyl groups in 3-sn-phosphoglycerides. This is Phospholipase A2 'basic' from Naja nigricollis (Black-necked spitting cobra).